The chain runs to 373 residues: 4-hydroxy-3-methylbut-2-en-1-yl diphosphate synthase (flavodoxin) (373 aa).

Cys270, Cys273, Cys305, and Glu312 together coordinate [4Fe-4S] cluster.

Belongs to the IspG family. It depends on [4Fe-4S] cluster as a cofactor.

The enzyme catalyses (2E)-4-hydroxy-3-methylbut-2-enyl diphosphate + oxidized [flavodoxin] + H2O + 2 H(+) = 2-C-methyl-D-erythritol 2,4-cyclic diphosphate + reduced [flavodoxin]. It participates in isoprenoid biosynthesis; isopentenyl diphosphate biosynthesis via DXP pathway; isopentenyl diphosphate from 1-deoxy-D-xylulose 5-phosphate: step 5/6. Converts 2C-methyl-D-erythritol 2,4-cyclodiphosphate (ME-2,4cPP) into 1-hydroxy-2-methyl-2-(E)-butenyl 4-diphosphate. The polypeptide is 4-hydroxy-3-methylbut-2-en-1-yl diphosphate synthase (flavodoxin) (Klebsiella pneumoniae (strain 342)).